Consider the following 611-residue polypeptide: Actin-binding LIM protein 2 (611 aa).

LIM zinc-binding domains lie at 22-81, 81-141, 151-210, and 210-270; these read ILCN…LYGT, TRCF…VSVG, RSCG…KFGI, and IRCD…ARTE. Residues Cys-83, Cys-86, His-103, Cys-106, Cys-109, Cys-112, Cys-131, and Cys-134 each contribute to the Zn(2+) site. Zn(2+) contacts are provided by Cys-212, Cys-215, His-232, Cys-235, Cys-238, Cys-241, His-260, and Cys-263. Positions 269–278 are enriched in basic and acidic residues; it reads TEDRNKETRT. Disordered stretches follow at residues 269-295 and 336-527; these read TEDR…SGSP and YISH…DQRN. 2 stretches are compositionally biased toward low complexity: residues 279-295 and 363-372; these read SSES…SGSP and SSPSSTGSVS. 4 positions are modified to phosphoserine: Ser-282, Ser-294, Ser-364, and Ser-367. Residues 393–404 show a composition bias toward polar residues; sequence SGRSTPSLSVLS. At Ser-452 the chain carries Phosphoserine. At Thr-472 the chain carries Phosphothreonine. The segment covering 473-488 has biased composition (polar residues); that stretch reads RTNSPDLDTQSLSHSS. Ser-476 and Ser-578 each carry phosphoserine. The region spanning 543-611 is the HP domain; it reads MREYKIYPYD…NDLKKKALLF (69 aa).

As to quaternary structure, interacts with F-actin and ABRA. In terms of tissue distribution, highly expressed in skeletal muscle.

It localises to the cytoplasm. May act as scaffold protein. May stimulate ABRA activity and ABRA-dependent SRF transcriptional activity. This Homo sapiens (Human) protein is Actin-binding LIM protein 2 (ABLIM2).